The chain runs to 310 residues: MLNSWPLAKDLQVLVEIVHSGSFSAAAATLGQTPAFVTKRIQILENTLATTLLNRSARGVALTESGQRCYEHALEILTQYQRLVDDVTQIKTRPEGMIRIGCSFGFGRSHIAPAITELMRNYPELQVHFELFDRQIDLVQDNIDLDIRINDAIPDYYIAHLLTKNKRILCAAPEYLQKYPQPQSLQELSRHDCLVTKERDMTHGIWELGNGQEKKSVKVSGHLSSNSGEIVLQWALEGKGIMLRSEWDVLPFLESGKLVRVLPEYAQSANIWAVYREPLYRSMKLRVCVEFLAAWCQQRLGKPDEGYQVM.

Residues 6–63 form the HTH lysR-type domain; sequence PLAKDLQVLVEIVHSGSFSAAAATLGQTPAFVTKRIQILENTLATTLLNRSARGVALT. Residues 23 to 42 constitute a DNA-binding region (H-T-H motif); it reads FSAAAATLGQTPAFVTKRIQ.

Belongs to the LysR transcriptional regulatory family.

In terms of biological role, positive regulator required for L-tartrate-dependent anaerobic growth on glycerol. Induces expression of the ttdA-ttdB-ygjE operon. The protein is HTH-type transcriptional activator TtdR (ttdR) of Escherichia coli O6:H1 (strain CFT073 / ATCC 700928 / UPEC).